A 241-amino-acid polypeptide reads, in one-letter code: MSSLCDTSNGESHADPCQDKEHPRMLIPELCRLFYQLGWVTGTGGGISLRHGDQIYIAPSGVQKERIQPEDMFVCDVAERDISSPPAWKKLRKSQCTPLFMNAYTMRAAQAVIHTHSKAAVMATLLYPGKEFRITHQEMIKGIRKGNSGTNYRYNDTLVVPIIENTPEEQDLKERMALAMEEYPEACAVLVRRHGVYVWGETWEKAKTMCECYDYLFDIAVQMKQCGLDPSAVPSEEIDIV.

Positions 1–11 are enriched in polar residues; it reads MSSLCDTSNGE. Residues 1 to 20 are disordered; sequence MSSLCDTSNGESHADPCQDK. Cysteine 96 is a substrate binding site. 2 residues coordinate Zn(2+): histidine 114 and histidine 116. The active-site Proton donor/acceptor is glutamate 138. Zn(2+) is bound at residue histidine 194.

Belongs to the aldolase class II family. MtnB subfamily. The cofactor is Zn(2+).

The protein localises to the cytoplasm. The catalysed reaction is 5-(methylsulfanyl)-D-ribulose 1-phosphate = 5-methylsulfanyl-2,3-dioxopentyl phosphate + H2O. It functions in the pathway amino-acid biosynthesis; L-methionine biosynthesis via salvage pathway; L-methionine from S-methyl-5-thio-alpha-D-ribose 1-phosphate: step 2/6. Its function is as follows. Catalyzes the dehydration of methylthioribulose-1-phosphate (MTRu-1-P) into 2,3-diketo-5-methylthiopentyl-1-phosphate (DK-MTP-1-P). Functions in the methionine salvage pathway. May play a role in apoptosis. The polypeptide is Methylthioribulose-1-phosphate dehydratase (Osmerus mordax (Rainbow smelt)).